Reading from the N-terminus, the 260-residue chain is Carbonic anhydrase 2 (260 aa).

Ser2 is subject to N-acetylserine. The residue at position 2 (Ser2) is a Phosphoserine. In terms of domain architecture, Alpha-carbonic anhydrase spans 3–259 (HHWGYSKSNG…LKNRKIKASF (257 aa)). Residues 16 to 39 (WHKEFPIANGDRQSPVDIDTGTAQ) form a disordered region. The active-site Proton donor/acceptor is the His64. Ser87 is subject to Phosphoserine. The Zn(2+) site is built by His94, His96, and His119. At Ser165 the chain carries Phosphoserine. 198–199 (TT) contributes to the substrate binding site. Position 232 is a phosphoserine (Ser232).

It belongs to the alpha-carbonic anhydrase family. In terms of assembly, interacts with SLC4A4 and SLC26A6. Interaction with SLC4A7 regulates SLC4A7 transporter activity. Zn(2+) is required as a cofactor.

It localises to the cytoplasm. The protein resides in the cell membrane. The catalysed reaction is hydrogencarbonate + H(+) = CO2 + H2O. It carries out the reaction urea = cyanamide + H2O. Inhibited by acetazolamide. Catalyzes the reversible hydration of carbon dioxide. Can also hydrate cyanamide to urea. Involved in the regulation of fluid secretion into the anterior chamber of the eye. Essential for bone resorption and osteoclast differentiation. Contributes to intracellular pH regulation in the duodenal upper villous epithelium during proton-coupled peptide absorption. Stimulates the chloride-bicarbonate exchange activity of SLC26A6. The polypeptide is Carbonic anhydrase 2 (Ca2) (Rattus norvegicus (Rat)).